A 934-amino-acid chain; its full sequence is Rab GTPase-activating protein tbc-11 (934 aa).

Residues 16-134 (VQYLGCSQLV…SKAETAAKAL (119 aa)) form the PID domain. The segment at 337–383 (FISLESDSDRKRSKQNLGKSPSRMPTQLLHPTGDDESDCDEPLLSGS) is disordered. The span at 351 to 361 (QNLGKSPSRMP) shows a compositional bias: polar residues. A Rab-GAP TBC domain is found at 422–612 (GIPDKLRGRV…FILDLFLSQG (191 aa)). Coiled-coil stretches lie at residues 727–800 (KIEL…YKKL) and 861–895 (LEEREDHIKNLEIDLAQTKLSLVEAECRNQDLTHQ).

In terms of biological role, rab GTPase activating protein for the small GTPases rab-6.1 and rab-6.2. Probably acts through rab-6.1 and rab-6.2 to play a role in microRNA-mediated gene silencing in different tissue types. Required for seam cell division and alae formation. The chain is Rab GTPase-activating protein tbc-11 from Caenorhabditis elegans.